Reading from the N-terminus, the 850-residue chain is METQTSWLSLWRWGLMIFGMLMICSARENLWVTVYYGVPVWRDAKTTLFCASDAKAYSTEKHNVWATHACVPTDPNPQEMSLPNVTENFNMWKNDMVDQMQEDIISVWDESLKPCVKITPLCVTLNCSDVNSNNSTDSNSSASNNSPEIMKNCSFNVTTEIRNKRKQEYALFYRQDVVPINSDNKSYILINCNTSVIKQACPKVSFQPIPIHYCAPAGFAILKCNNKTFNGTGPCKNVSTVQCTHGIKPVVSTQLLLNGSVAEGDIIIRSENISDNAKNIIVQLNDTVEIVCTRPNNNTRKGIHMGPGQVLYATGEIIGDIRKAYCNISRKDWNNTLRRVAKKLREHFNKTIDFTSPSGGDIEITTHSFNCGGEFFYCNTSTLFNSSWDENNIKDTNSTNDNTTITIPCKIKQIVRMWQRTGQAIYAPPIAGNITCKSNITGLLLTRDGGNRNGSENGTETFRPTGGNMKDNWRSELYKYKVVELEPLGVAPTKAKRRVVEREKRAVGIGAVFLGFLGTAGSTMGAASITLTVQVRQLLSGIVQQQSNLLKAIXAQQHLLKLTVWGIKQLQARVLAVERYLKDQQLLGIWGCSGKLICTTNVPWNASWSNKSYEDIWENMTWIQWEREINNYTGIIYSLIEEAQNQQETNEKDLLALDKWTNLWNWFNISNWLWYIKIFIMIIGGLIGLRIIFAVLAIVNRVRQGYSPLSFQTLIPNPTEADRPGGIEEGGGEQGRTRSIRLVNGFLALAWDDLRSLCLFSYHRLRDFVLIAARTVGTLGLRGWEILKYLVNLVWYWGQELKNSAISLLNTTAIAVAEGTDRIIEIAQRAFRAILHIPRRIRQGLERALL.

The first 28 residues, 1-28, serve as a signal peptide directing secretion; it reads METQTSWLSLWRWGLMIFGMLMICSARE. At 29 to 678 the chain is on the extracellular side; the sequence is NLWVTVYYGV…ISNWLWYIKI (650 aa). A disulfide bond links cysteine 50 and cysteine 70. Asparagine 84, asparagine 126, asparagine 133, asparagine 134, asparagine 139, asparagine 152, asparagine 156, asparagine 184, asparagine 193, asparagine 226, asparagine 230, asparagine 237, asparagine 258, asparagine 272, asparagine 285, asparagine 297, asparagine 327, asparagine 334, and asparagine 349 each carry an N-linked (GlcNAc...) asparagine; by host glycan. 5 disulfide bridges follow: cysteine 115/cysteine 201, cysteine 122/cysteine 192, cysteine 127/cysteine 153, cysteine 214/cysteine 243, and cysteine 224/cysteine 235. The segment at 127-152 is V1; that stretch reads CSDVNSNNSTDSNSSASNNSPEIMKN. A V2 region spans residues 153–192; sequence CSFNVTTEIRNKRKQEYALFYRQDVVPINSDNKSYILINC. The segment at 292-325 is V3; that stretch reads CTRPNNNTRKGIHMGPGQVLYATGEIIGDIRKAY. Cysteines 292 and 326 form a disulfide. Residues 357–367 are CD4-binding loop; the sequence is PSGGDIEITTH. 2 disulfide bridges follow: cysteine 371/cysteine 436 and cysteine 378/cysteine 409. Residues 378 to 409 are V4; it reads CNTSTLFNSSWDENNIKDTNSTNDNTTITIPC. Residues asparagine 379, asparagine 385, asparagine 397, asparagine 402, asparagine 433, asparagine 439, asparagine 453, and asparagine 457 are each glycosylated (N-linked (GlcNAc...) asparagine; by host). Residues 447 to 467 are disordered; that stretch reads RDGGNRNGSENGTETFRPTGG. Positions 453–462 are enriched in polar residues; sequence NGSENGTETF. V5 stretches follow at residues 453 to 465 and 454 to 465; these read NGSE…FRPT and GSENGTETFRPT. The segment at 506–526 is fusion peptide; sequence AVGIGAVFLGFLGTAGSTMGA. The tract at residues 568–586 is immunosuppression; that stretch reads KQLQARVLAVERYLKDQQL. Cysteines 592 and 598 form a disulfide. N-linked (GlcNAc...) asparagine; by host glycans are attached at residues asparagine 605, asparagine 610, asparagine 619, asparagine 631, and asparagine 668. The stretch at 627–661 forms a coiled coil; that stretch reads REINNYTGIIYSLIEEAQNQQETNEKDLLALDKWT. Positions 656-677 are MPER; binding to GalCer; sequence ALDKWTNLWNWFNISNWLWYIK. The chain crosses the membrane as a helical span at residues 679 to 699; sequence FIMIIGGLIGLRIIFAVLAIV. Topologically, residues 700–850 are cytoplasmic; the sequence is NRVRQGYSPL…IRQGLERALL (151 aa). The YXXL motif; contains endocytosis signal signature appears at 706–709; sequence YSPL. A lipid anchor (S-palmitoyl cysteine; by host) is attached at cysteine 758. The short motif at 849-850 is the Di-leucine internalization motif element; the sequence is LL.

Belongs to the HIV-1 env protein family. In terms of assembly, the mature envelope protein (Env) consists of a homotrimer of non-covalently associated gp120-gp41 heterodimers. The resulting complex protrudes from the virus surface as a spike. There seems to be as few as 10 spikes on the average virion. Interacts with host CD4, CCR5 and CXCR4. Gp120 also interacts with the C-type lectins CD209/DC-SIGN and CLEC4M/DC-SIGNR (collectively referred to as DC-SIGN(R)). Gp120 and gp41 interact with GalCer. Gp120 interacts with host ITGA4/ITGB7 complex; on CD4+ T-cells, this interaction results in rapid activation of integrin ITGAL/LFA-1, which facilitates efficient cell-to-cell spreading of HIV-1. Gp120 interacts with cell-associated heparan sulfate; this interaction increases virus infectivity on permissive cells and may be involved in infection of CD4- cells. As to quaternary structure, the mature envelope protein (Env) consists of a homotrimer of non-covalently associated gp120-gp41 heterodimers. The resulting complex protrudes from the virus surface as a spike. There seems to be as few as 10 spikes on the average virion. Post-translationally, highly glycosylated by host. The high number of glycan on the protein is reffered to as 'glycan shield' because it contributes to hide protein sequence from adaptive immune system. Palmitoylation of the transmembrane protein and of Env polyprotein (prior to its proteolytic cleavage) is essential for their association with host cell membrane lipid rafts. Palmitoylation is therefore required for envelope trafficking to classical lipid rafts, but not for viral replication. In terms of processing, specific enzymatic cleavages in vivo yield mature proteins. Envelope glycoproteins are synthesized as an inactive precursor that is heavily N-glycosylated and processed likely by host cell furin in the Golgi to yield the mature SU and TM proteins. The cleavage site between SU and TM requires the minimal sequence [KR]-X-[KR]-R. About 2 of the 9 disulfide bonds of gp41 are reduced by P4HB/PDI, following binding to CD4 receptor.

The protein resides in the virion membrane. Its subcellular location is the host cell membrane. The protein localises to the host endosome membrane. Oligomerizes in the host endoplasmic reticulum into predominantly trimers. In a second time, gp160 transits in the host Golgi, where glycosylation is completed. The precursor is then proteolytically cleaved in the trans-Golgi and thereby activated by cellular furin or furin-like proteases to produce gp120 and gp41. Its function is as follows. Attaches the virus to the host lymphoid cell by binding to the primary receptor CD4. This interaction induces a structural rearrangement creating a high affinity binding site for a chemokine coreceptor like CXCR4 and/or CCR5. Acts as a ligand for CD209/DC-SIGN and CLEC4M/DC-SIGNR, which are respectively found on dendritic cells (DCs), and on endothelial cells of liver sinusoids and lymph node sinuses. These interactions allow capture of viral particles at mucosal surfaces by these cells and subsequent transmission to permissive cells. HIV subverts the migration properties of dendritic cells to gain access to CD4+ T-cells in lymph nodes. Virus transmission to permissive T-cells occurs either in trans (without DCs infection, through viral capture and transmission), or in cis (following DCs productive infection, through the usual CD4-gp120 interaction), thereby inducing a robust infection. In trans infection, bound virions remain infectious over days and it is proposed that they are not degraded, but protected in non-lysosomal acidic organelles within the DCs close to the cell membrane thus contributing to the viral infectious potential during DCs' migration from the periphery to the lymphoid tissues. On arrival at lymphoid tissues, intact virions recycle back to DCs' cell surface allowing virus transmission to CD4+ T-cells. In terms of biological role, acts as a class I viral fusion protein. Under the current model, the protein has at least 3 conformational states: pre-fusion native state, pre-hairpin intermediate state, and post-fusion hairpin state. During fusion of viral and target intracellular membranes, the coiled coil regions (heptad repeats) assume a trimer-of-hairpins structure, positioning the fusion peptide in close proximity to the C-terminal region of the ectodomain. The formation of this structure appears to drive apposition and subsequent fusion of viral and target cell membranes. Complete fusion occurs in host cell endosomes and is dynamin-dependent, however some lipid transfer might occur at the plasma membrane. The virus undergoes clathrin-dependent internalization long before endosomal fusion, thus minimizing the surface exposure of conserved viral epitopes during fusion and reducing the efficacy of inhibitors targeting these epitopes. Membranes fusion leads to delivery of the nucleocapsid into the cytoplasm. The protein is Envelope glycoprotein gp160 of Human immunodeficiency virus type 1 group M subtype J (isolate SE9173) (HIV-1).